The chain runs to 147 residues: Cysteine proteinase inhibitor 2 (147 aa).

Positions 1–27 (MATMLKVSLVLSLLGFLVIAVVTPSAA) are cleaved as a signal peptide. One can recognise a Cystatin domain in the interval 87–117 (LQFSRVVSAQKQVVAGLKYYLRIEVTQPNGS). The short motif at 98 to 102 (QVVAG) is the Secondary area of contact element. N115 carries an N-linked (GlcNAc...) asparagine glycan.

This sequence belongs to the cystatin family. Phytocystatin subfamily.

It localises to the secreted. Its function is as follows. Specific inhibitor of cysteine proteinases. Probably involved in the regulation of endogenous processes and in defense against pests and pathogens. The protein is Cysteine proteinase inhibitor 2 (CYS2) of Arabidopsis thaliana (Mouse-ear cress).